The primary structure comprises 232 residues: Large ribosomal subunit protein uL1 (232 aa).

This sequence belongs to the universal ribosomal protein uL1 family. Part of the 50S ribosomal subunit.

Functionally, binds directly to 23S rRNA. The L1 stalk is quite mobile in the ribosome, and is involved in E site tRNA release. Its function is as follows. Protein L1 is also a translational repressor protein, it controls the translation of the L11 operon by binding to its mRNA. In Aromatoleum aromaticum (strain DSM 19018 / LMG 30748 / EbN1) (Azoarcus sp. (strain EbN1)), this protein is Large ribosomal subunit protein uL1.